The sequence spans 463 residues: Ribosomal protein uS12 methylthiotransferase RimO (463 aa).

Positions proline 15–proline 130 constitute an MTTase N-terminal domain. 6 residues coordinate [4Fe-4S] cluster: cysteine 24, cysteine 60, cysteine 89, cysteine 161, cysteine 165, and cysteine 168. Residues leucine 147–alanine 392 form the Radical SAM core domain. The TRAM domain maps to alanine 395–valine 463.

This sequence belongs to the methylthiotransferase family. RimO subfamily. [4Fe-4S] cluster serves as cofactor.

It localises to the cytoplasm. The enzyme catalyses L-aspartate(89)-[ribosomal protein uS12]-hydrogen + (sulfur carrier)-SH + AH2 + 2 S-adenosyl-L-methionine = 3-methylsulfanyl-L-aspartate(89)-[ribosomal protein uS12]-hydrogen + (sulfur carrier)-H + 5'-deoxyadenosine + L-methionine + A + S-adenosyl-L-homocysteine + 2 H(+). In terms of biological role, catalyzes the methylthiolation of an aspartic acid residue of ribosomal protein uS12. The chain is Ribosomal protein uS12 methylthiotransferase RimO from Burkholderia mallei (strain NCTC 10229).